Here is a 195-residue protein sequence, read N- to C-terminus: Imidazoleglycerol-phosphate dehydratase (195 aa).

This sequence belongs to the imidazoleglycerol-phosphate dehydratase family.

It localises to the cytoplasm. The catalysed reaction is D-erythro-1-(imidazol-4-yl)glycerol 3-phosphate = 3-(imidazol-4-yl)-2-oxopropyl phosphate + H2O. The protein operates within amino-acid biosynthesis; L-histidine biosynthesis; L-histidine from 5-phospho-alpha-D-ribose 1-diphosphate: step 6/9. The chain is Imidazoleglycerol-phosphate dehydratase from Thermotoga maritima (strain ATCC 43589 / DSM 3109 / JCM 10099 / NBRC 100826 / MSB8).